Here is a 166-residue protein sequence, read N- to C-terminus: Transcriptional repressor NrdR (166 aa).

A zinc finger spans residues 3–34 (CPFCGFSDSRVLDSRPTVEGNSIRRRRECCGC). The region spanning 49–139 (LIVVKKDGRR…VYREFRDAES (91 aa)) is the ATP-cone domain.

This sequence belongs to the NrdR family. Zn(2+) serves as cofactor.

Negatively regulates transcription of bacterial ribonucleotide reductase nrd genes and operons by binding to NrdR-boxes. The protein is Transcriptional repressor NrdR of Pelotomaculum thermopropionicum (strain DSM 13744 / JCM 10971 / SI).